A 244-amino-acid polypeptide reads, in one-letter code: Flagellar L-ring protein (244 aa).

The signal sequence occupies residues 1–18 (MNMRVFIFLIFAAASVSA). Cys19 carries the N-palmitoyl cysteine lipid modification. Residue Cys19 is the site of S-diacylglycerol cysteine attachment.

This sequence belongs to the FlgH family. In terms of assembly, the basal body constitutes a major portion of the flagellar organelle and consists of four rings (L,P,S, and M) mounted on a central rod.

The protein localises to the cell outer membrane. The protein resides in the bacterial flagellum basal body. Its function is as follows. Assembles around the rod to form the L-ring and probably protects the motor/basal body from shearing forces during rotation. In Jannaschia sp. (strain CCS1), this protein is Flagellar L-ring protein.